Consider the following 141-residue polypeptide: Transcriptional regulator MraZ (141 aa).

SpoVT-AbrB domains lie at 5 to 47 and 76 to 119; these read TFNI…KPQD and ANFV…DKKL.

Belongs to the MraZ family. Homooctamer. Forms a ring.

It is found in the cytoplasm. It localises to the nucleoid. This Mycoplasma pneumoniae (strain ATCC 29342 / M129 / Subtype 1) (Mycoplasmoides pneumoniae) protein is Transcriptional regulator MraZ.